The sequence spans 377 residues: Actin-related protein T2 (377 aa).

It belongs to the actin family.

Its subcellular location is the cytoplasm. It is found in the cytoskeleton. In Bos taurus (Bovine), this protein is Actin-related protein T2 (ACTRT2).